The following is an 856-amino-acid chain: DNA mismatch repair protein MutS (856 aa).

611-618 (GPNMGGKS) contacts ATP.

Belongs to the DNA mismatch repair MutS family.

Functionally, this protein is involved in the repair of mismatches in DNA. It is possible that it carries out the mismatch recognition step. This protein has a weak ATPase activity. This chain is DNA mismatch repair protein MutS, found in Histophilus somni (strain 129Pt) (Haemophilus somnus).